The primary structure comprises 50 residues: Phospholipase A2 trimorphin (50 aa).

3 residues coordinate Ca(2+): Tyr-28, Gly-30, and Gly-32. A disulfide bridge connects residues Cys-29 and Cys-45. Residue His-48 is part of the active site. Asp-49 is a binding site for Ca(2+).

It depends on Ca(2+) as a cofactor. As to expression, expressed by the venom gland.

The protein resides in the secreted. It carries out the reaction a 1,2-diacyl-sn-glycero-3-phosphocholine + H2O = a 1-acyl-sn-glycero-3-phosphocholine + a fatty acid + H(+). Its activity is regulated as follows. Inhibited by EDTA. In terms of biological role, PLA2 catalyzes the calcium-dependent hydrolysis of the 2-acyl groups in 3-sn-phosphoglycerides. The protein is Phospholipase A2 trimorphin of Trimorphodon lambda (Sonoran lyre snake).